A 525-amino-acid chain; its full sequence is GMP synthase [glutamine-hydrolyzing] (525 aa).

The Glutamine amidotransferase type-1 domain maps to 8 to 206 (PLLILDFGSQ…VVDICKASTD (199 aa)). Cys-85 functions as the Nucleophile in the catalytic mechanism. Active-site residues include His-180 and Glu-182. Positions 207 to 400 (WTPEHIIDEA…LGLPHDMVYR (194 aa)) constitute a GMPS ATP-PPase domain. 234 to 240 (SGGVDSS) is a binding site for ATP.

As to quaternary structure, homodimer.

It carries out the reaction XMP + L-glutamine + ATP + H2O = GMP + L-glutamate + AMP + diphosphate + 2 H(+). It participates in purine metabolism; GMP biosynthesis; GMP from XMP (L-Gln route): step 1/1. In terms of biological role, catalyzes the synthesis of GMP from XMP. This is GMP synthase [glutamine-hydrolyzing] from Legionella pneumophila (strain Paris).